The sequence spans 355 residues: UDP-N-acetylglucosamine--N-acetylmuramyl-(pentapeptide) pyrophosphoryl-undecaprenol N-acetylglucosamine transferase (355 aa).

UDP-N-acetyl-alpha-D-glucosamine is bound by residues 14 to 16 (SGG), N126, R162, S190, I243, 262 to 267 (ALTVSE), and Q288.

This sequence belongs to the glycosyltransferase 28 family. MurG subfamily.

It localises to the cell inner membrane. It carries out the reaction di-trans,octa-cis-undecaprenyl diphospho-N-acetyl-alpha-D-muramoyl-L-alanyl-D-glutamyl-meso-2,6-diaminopimeloyl-D-alanyl-D-alanine + UDP-N-acetyl-alpha-D-glucosamine = di-trans,octa-cis-undecaprenyl diphospho-[N-acetyl-alpha-D-glucosaminyl-(1-&gt;4)]-N-acetyl-alpha-D-muramoyl-L-alanyl-D-glutamyl-meso-2,6-diaminopimeloyl-D-alanyl-D-alanine + UDP + H(+). It functions in the pathway cell wall biogenesis; peptidoglycan biosynthesis. In terms of biological role, cell wall formation. Catalyzes the transfer of a GlcNAc subunit on undecaprenyl-pyrophosphoryl-MurNAc-pentapeptide (lipid intermediate I) to form undecaprenyl-pyrophosphoryl-MurNAc-(pentapeptide)GlcNAc (lipid intermediate II). This Blochmanniella pennsylvanica (strain BPEN) protein is UDP-N-acetylglucosamine--N-acetylmuramyl-(pentapeptide) pyrophosphoryl-undecaprenol N-acetylglucosamine transferase.